A 90-amino-acid chain; its full sequence is Progonadoliberin-1 (90 aa).

The signal sequence occupies residues 1 to 21 (MILKLMAGILLLTVCLEGCSS). At glutamine 22 the chain carries Pyrrolidone carboxylic acid. Glycine 31 is modified (glycine amide).

It belongs to the GnRH family. The precursor is cleaved by ACE, which removes the Gly-Lys-Arg peptide at the C-terminus, leading to mature hormone. The mature form of Gonadoliberin-1 is also cleaved and degraded by ACE.

The protein localises to the secreted. In terms of biological role, stimulates the secretion of gonadotropins; it stimulates the secretion of both luteinizing and follicle-stimulating hormones. This is Progonadoliberin-1 (Gnrh1) from Mus musculus (Mouse).